We begin with the raw amino-acid sequence, 185 residues long: MSKEIIAKAQERMNQSHQSLAREFSHIRAGRANASLLDRISVEYYGSPTPLNQLAGITVPEARVLLITPFDKSILKDIERALNASDLGLTPQSDGTVIRLVIPALTEETRKNLAKDVKKVGENSKVAIRNIRRDAMDEAKKAEKAKEITEDELKTLEKDIQKVTDDAIKTIDKMTADKEKELLEV.

This sequence belongs to the RRF family.

The protein localises to the cytoplasm. Responsible for the release of ribosomes from messenger RNA at the termination of protein biosynthesis. May increase the efficiency of translation by recycling ribosomes from one round of translation to another. The protein is Ribosome-recycling factor of Streptococcus suis (strain 98HAH33).